We begin with the raw amino-acid sequence, 40 residues long: Antimicrobial peptide 2 (40 aa).

The 40-residue stretch at 1-40 (AQCGAQGGGATCPGGLCCSQWGWCGSTPKYCGAGCQSNCR) folds into the Chitin-binding type-1 domain. Cystine bridges form between Cys3/Cys18, Cys12/Cys24, Cys17/Cys31, and Cys35/Cys39.

In terms of processing, not glycosylated.

In terms of biological role, antimicrobial peptide active against plant pathogenic fungi and Gram-negative and -positive bacteria. The protein is Antimicrobial peptide 2 of Fagopyrum esculentum (Common buckwheat).